Consider the following 172-residue polypeptide: Protein-export protein SecB (172 aa).

The interval 1 to 22 (MADETSADINNPALQPNGEDTS) is disordered. The segment covering 7 to 20 (ADINNPALQPNGED) has biased composition (polar residues).

The protein belongs to the SecB family. As to quaternary structure, homotetramer, a dimer of dimers. One homotetramer interacts with 1 SecA dimer.

The protein resides in the cytoplasm. One of the proteins required for the normal export of preproteins out of the cell cytoplasm. It is a molecular chaperone that binds to a subset of precursor proteins, maintaining them in a translocation-competent state. It also specifically binds to its receptor SecA. This is Protein-export protein SecB from Sphingopyxis alaskensis (strain DSM 13593 / LMG 18877 / RB2256) (Sphingomonas alaskensis).